Consider the following 336-residue polypeptide: Biotin synthase (336 aa).

Residues 48–277 (VFGDEVEFCS…QAELRLCGGR (230 aa)) enclose the Radical SAM core domain. [4Fe-4S] cluster-binding residues include Cys66, Cys70, and Cys73. Cys110, Cys142, Cys202, and Arg272 together coordinate [2Fe-2S] cluster.

The protein belongs to the radical SAM superfamily. Biotin synthase family. Homodimer. The cofactor is [4Fe-4S] cluster. [2Fe-2S] cluster serves as cofactor.

It carries out the reaction (4R,5S)-dethiobiotin + (sulfur carrier)-SH + 2 reduced [2Fe-2S]-[ferredoxin] + 2 S-adenosyl-L-methionine = (sulfur carrier)-H + biotin + 2 5'-deoxyadenosine + 2 L-methionine + 2 oxidized [2Fe-2S]-[ferredoxin]. The protein operates within cofactor biosynthesis; biotin biosynthesis; biotin from 7,8-diaminononanoate: step 2/2. In terms of biological role, catalyzes the conversion of dethiobiotin (DTB) to biotin by the insertion of a sulfur atom into dethiobiotin via a radical-based mechanism. The polypeptide is Biotin synthase (Persephonella marina (strain DSM 14350 / EX-H1)).